The following is a 136-amino-acid chain: C-type natriuretic peptide prohormone (136 aa).

The signal sequence occupies residues Met-1–Ala-21. An intrachain disulfide couples Cys-120 to Cys-136.

Belongs to the natriuretic peptide family. In terms of tissue distribution, CNP-115 is differentially processed to produce CNP-38 and CNP-39 in the heart and CNP-22 in the brain.

Its subcellular location is the secreted. In terms of biological role, hormone which may be vasoactive and natriuretic. Has a cGMP-stimulating activity. The polypeptide is C-type natriuretic peptide prohormone (Triakis scyllium (Banded houndshark)).